We begin with the raw amino-acid sequence, 647 residues long: tRNA 5-methylaminomethyl-2-thiouridine biosynthesis bifunctional protein MnmC (647 aa).

The tract at residues 1–227 (MLTWKNNLTP…KREMLIGSYS (227 aa)) is tRNA (mnm(5)s(2)U34)-methyltransferase. The FAD-dependent cmnm(5)s(2)U34 oxidoreductase stretch occupies residues 256 to 647 (VGAGIAGTTL…ARFLYRKVRK (392 aa)).

It in the N-terminal section; belongs to the methyltransferase superfamily. tRNA (mnm(5)s(2)U34)-methyltransferase family. This sequence in the C-terminal section; belongs to the DAO family. Requires FAD as cofactor.

It localises to the cytoplasm. The enzyme catalyses 5-aminomethyl-2-thiouridine(34) in tRNA + S-adenosyl-L-methionine = 5-methylaminomethyl-2-thiouridine(34) in tRNA + S-adenosyl-L-homocysteine + H(+). Catalyzes the last two steps in the biosynthesis of 5-methylaminomethyl-2-thiouridine (mnm(5)s(2)U) at the wobble position (U34) in tRNA. Catalyzes the FAD-dependent demodification of cmnm(5)s(2)U34 to nm(5)s(2)U34, followed by the transfer of a methyl group from S-adenosyl-L-methionine to nm(5)s(2)U34, to form mnm(5)s(2)U34. This is tRNA 5-methylaminomethyl-2-thiouridine biosynthesis bifunctional protein MnmC from Leptospira interrogans serogroup Icterohaemorrhagiae serovar Lai (strain 56601).